The primary structure comprises 335 residues: Dihydroorotate dehydrogenase (quinone) (335 aa).

Residues Ala61 to Lys65 and Thr85 each bind FMN. Lys65 serves as a coordination point for substrate. Asn110–Phe114 is a substrate binding site. FMN is bound by residues Asn138 and Asn171. Position 171 (Asn171) interacts with substrate. The active-site Nucleophile is the Ser174. Asn176 contacts substrate. FMN-binding residues include Lys216 and Thr244. Asn245–Thr246 lines the substrate pocket. Residues Gly267, Gly296, and Tyr317–Ser318 each bind FMN.

Belongs to the dihydroorotate dehydrogenase family. Type 2 subfamily. In terms of assembly, monomer. FMN is required as a cofactor.

It localises to the cell membrane. It carries out the reaction (S)-dihydroorotate + a quinone = orotate + a quinol. It participates in pyrimidine metabolism; UMP biosynthesis via de novo pathway; orotate from (S)-dihydroorotate (quinone route): step 1/1. Catalyzes the conversion of dihydroorotate to orotate with quinone as electron acceptor. This Pseudoalteromonas atlantica (strain T6c / ATCC BAA-1087) protein is Dihydroorotate dehydrogenase (quinone).